An 805-amino-acid polypeptide reads, in one-letter code: Leucine--tRNA ligase (805 aa).

The short motif at 40–51 (PYPSGAGLHVGH) is the 'HIGH' region element. A 'KMSKS' region motif is present at residues 576 to 580 (KMSKS). ATP is bound at residue Lys-579.

It belongs to the class-I aminoacyl-tRNA synthetase family.

It is found in the cytoplasm. The catalysed reaction is tRNA(Leu) + L-leucine + ATP = L-leucyl-tRNA(Leu) + AMP + diphosphate. In Geobacillus kaustophilus (strain HTA426), this protein is Leucine--tRNA ligase.